Consider the following 929-residue polypeptide: Protein unc-45 homolog A (929 aa).

TPR repeat units follow at residues 6-39, 43-76, and 77-110; these read VEQLRKEGNELFKCGDYGGALAAYTQALGLDATP, AVLHRNRAACYLKLEDYDKAETEASKAIEKDGGD, and VKALYRRSQALEKLGRLDQAVLDLQRCVSLEPKN. Residue Lys55 is modified to N6-acetyllysine. At Lys468 the chain carries N6-acetyllysine.

In terms of assembly, interacts with PGR isoforms A and B as well as with NR3C1 in the absence of ligand, and with HSP90AB1. Binding to HSP90AB1 involves 2 UNC45A monomers per HSP90AB1 dimer.

Its subcellular location is the cytoplasm. It is found in the perinuclear region. The protein resides in the nucleus. Functionally, may act as co-chaperone for HSP90 (Potential). Prevents the stimulation of HSP90AB1 ATPase activity by AHSA1. Positive factor in promoting PGR function in the cell. May be necessary for proper folding of myosin (Potential). Necessary for normal cell proliferation. Necessary for normal myotube formation and myosin accumulation during muscle cell development. May play a role in erythropoiesis in stroma cells in the spleen. This is Protein unc-45 homolog A (UNC45A) from Pongo abelii (Sumatran orangutan).